The sequence spans 211 residues: Inactive ribonuclease-like protein 10 (211 aa).

A signal peptide spans 1-24; it reads MKLTLVQIFFMMLLLLLGLGVGLG.

It belongs to the pancreatic ribonuclease family. Post-translationally, the N-terminus is blocked. Glycosylated.

It is found in the secreted. In terms of biological role, secreted proximal epididymal protein required for post-testicular sperm maturation and male fertility. May be involved in sperm adhesion to the egg zona pellucida. Does not have ribonuclease activity. The protein is Inactive ribonuclease-like protein 10 (RNASE10) of Bos taurus (Bovine).